The primary structure comprises 1024 residues: MTMITDSLAVVLQRRDWENPGVTQLNRLAAHPPFASWRNSEEARTDRPSQQLRSLNGEWRFAWFPAPEAVPESWLECDLPDADTVVVPSNWQMHGYDAPIYTNVTYPITVNPPFVPAENPTGCYSLTFNIDESWLQEGQTRIIFDGVNSAFHLWCNGRWVGYGQDSRLPSEFDLSAFLHAGENRLAVMVLRWSDGSYLEDQDMWRMSGIFRDVSLLHKPTTQISDFQVTTRFNDDFSRAVLEAEVQMYGELRDELRVTVSLWQGETQVASGTAPFGGEIIDERGGYADRVTLRLNVENPELWSAEIPNLYRAVVELHTADGTLIEAEACDVGFREVRIENGLLLLNGKPLLIRGVNRHEHHPLHGQVMDEQTMVQDILLMKQNNFNAVRCSHYPNHPLWYTLCDRYGLYVVDEANIETHGMVPMNRLTDDPRWLPAMSERVTRMVQRDRNHPSVIIWSLGNESGHGANHDALYRWIKSVDPSRPVQYEGGGADTTATDIICPMYARVDEDQPFPAVPKWSIKKWLSLPGEMRPLILCEYAHAMGNSLGGFAKYWQAFRQYPRLQGGFVWDWVDQSLIKYDENGNPWSAYGGDFGDTPNDRQFCMNGLVFADRTPHPALTEAKHQQQFFQFRLSGRTIEVTSEYLFRHSDNEFLHWMVALDGKPLASGEVPLDVGPQGKQLIELPELPQPESAGQLWLTVRVVQPNATAWSEAGHISAWQQWRLAENLSVTLPSASHAIPQLTTSGTDFCIELGNKRWQFNRQSGFLSQMWIGDEKQLLTPLRDQFTRAPLDNDIGVSEATRIDPNAWVERWKAAGHYQAEAALLQCTADTLADAVLITTAHAWQHQGKTLFISRKTYRIDGHGEMVINVDVAVASDTPHPARIGLTCQLAQVSERVNWLGLGPQENYPDRLTAACFDRWDLPLSDMYTPYVFPSENGLRCGTRELNYGPHQWRGDFQFNISRYSQQQLMETSHRHLLHAEEGTWLNIDGFHMGIGGDDSWSPSVSAEFQLSAGRYHYQLVWCQK.

The substrate site is built by Asn103 and Asp202. Asp202 is a binding site for Na(+). Residues Glu417, His419, and Glu462 each coordinate Mg(2+). Residues Glu462 and 538-541 (EYAH) each bind substrate. Glu462 functions as the Proton donor in the catalytic mechanism. The Nucleophile role is filled by Glu538. Mg(2+) is bound at residue Asn598. The Na(+) site is built by Phe602 and Asn605. Substrate contacts are provided by Asn605 and Trp1000.

It belongs to the glycosyl hydrolase 2 family. As to quaternary structure, homotetramer. Requires Mg(2+) as cofactor. The cofactor is Na(+).

It catalyses the reaction Hydrolysis of terminal non-reducing beta-D-galactose residues in beta-D-galactosides.. In Escherichia coli (strain UTI89 / UPEC), this protein is Beta-galactosidase.